The following is a 98-amino-acid chain: UPF0213 protein LACR_2011 (98 aa).

The GIY-YIG domain maps to 2–79 (NTHFTYVLQC…KLVRQQKLKL (78 aa)).

The protein belongs to the UPF0213 family.

The protein is UPF0213 protein LACR_2011 of Lactococcus lactis subsp. cremoris (strain SK11).